Consider the following 117-residue polypeptide: MTRIKRGYIARRRRTKIRLFASSFRGAHSRLTRTMTQQRIRALVSAHRDRGRRKRDFRRLWITRINAVIQEMEVFNSYNRFIHNLYKKQVLLNRKILAQIALLNRSCLYTISNEIIK.

This sequence belongs to the bacterial ribosomal protein bL20 family.

It is found in the plastid. The protein localises to the chloroplast. Its function is as follows. Binds directly to 23S ribosomal RNA and is necessary for the in vitro assembly process of the 50S ribosomal subunit. It is not involved in the protein synthesizing functions of that subunit. The protein is Large ribosomal subunit protein bL20c of Aethionema grandiflorum (Persian stone-cress).